The following is a 414-amino-acid chain: F-box protein At3g47030 (414 aa).

The disordered stretch occupies residues 1–24 (MSGMLGLSAVMGKRPKQQVTARPR). The F-box domain maps to 28 to 77 (IEKPEEIPDDLLIDVFSRLSIEDVARCRCLSRFWSSILRRRYFTELFHKM).

The polypeptide is F-box protein At3g47030 (Arabidopsis thaliana (Mouse-ear cress)).